Consider the following 359-residue polypeptide: DNA replication and repair protein RecF (359 aa).

Position 30–37 (30–37) interacts with ATP; sequence GPNGSGKT.

The protein belongs to the RecF family.

It is found in the cytoplasm. In terms of biological role, the RecF protein is involved in DNA metabolism; it is required for DNA replication and normal SOS inducibility. RecF binds preferentially to single-stranded, linear DNA. It also seems to bind ATP. The polypeptide is DNA replication and repair protein RecF (Vibrio vulnificus (strain CMCP6)).